Consider the following 548-residue polypeptide: Chaperonin GroEL (548 aa).

ATP-binding positions include 30–33 (TLGP), K51, 87–91 (DGTTT), G415, 479–481 (NAA), and D495.

The protein belongs to the chaperonin (HSP60) family. Forms a cylinder of 14 subunits composed of two heptameric rings stacked back-to-back. Interacts with the co-chaperonin GroES.

It localises to the cytoplasm. It carries out the reaction ATP + H2O + a folded polypeptide = ADP + phosphate + an unfolded polypeptide.. Functionally, together with its co-chaperonin GroES, plays an essential role in assisting protein folding. The GroEL-GroES system forms a nano-cage that allows encapsulation of the non-native substrate proteins and provides a physical environment optimized to promote and accelerate protein folding. This chain is Chaperonin GroEL, found in Lawsonia intracellularis (strain PHE/MN1-00).